A 216-amino-acid polypeptide reads, in one-letter code: Ras-related protein RABA1a (216 aa).

20-27 (GDSGVGKS) lines the GTP pocket. The short motif at 42 to 50 (SKSTIGVEF) is the Effector region element. GTP contacts are provided by residues 68-72 (DTAGQ), 126-129 (NKCD), and 156-157 (SA). Residues Cys-213 and Cys-214 are each lipidated (S-geranylgeranyl cysteine).

Belongs to the small GTPase superfamily. Rab family.

The protein localises to the cell membrane. Functionally, involved in auxin-mediated response. May be involved in vesicle trafficking of components involved in polar auxin transport. Binds GTP and GDP and possesses intrinsic GTPase activity. The sequence is that of Ras-related protein RABA1a (RABA1A) from Arabidopsis thaliana (Mouse-ear cress).